A 71-amino-acid polypeptide reads, in one-letter code: Ubiquinol-cytochrome c reductase complex assembly factor 6 (71 aa).

Residues 1-8 lie on the Mitochondrial matrix side of the membrane; it reads MPAGVPMS. A helical; Signal-anchor for type II membrane protein transmembrane segment spans residues 9–25; the sequence is TYLKMLAASLLAMCAGA. Topologically, residues 26-71 are mitochondrial intermembrane; it reads EVVHRYYRPDLTIPEIPPKRGELKTELLGLKERKHKPQISQQEELK. The interval 52 to 71 is disordered; the sequence is LLGLKERKHKPQISQQEELK.

Belongs to the UQCC6 family. As to quaternary structure, interacts with UQCRC1. Interacts with UQCRQ. Interacts with UQCC5. Forms a complex, named COMB/coordinator of mitochondrial CYTB biogenesis, composed of UQCC1, UQCC2, UQCC4, UQCC5 and UQCC6; stabilizes nascent cytochrome b/MT-CYB and promotes its membrane insertion. Forms a complex, named COMA, composed of UQCC1, UQCC2 and UQCC4; activates MT-CYB translation. Forms a complex, named COMC, composed of UQCC1, UQCC2; UQCC3 and UQCC4; mediates MT-CYB hemylation and association with the first nuclear-encoded complex III subunit UQCRQ. Interacts with MT-CYB.

It is found in the mitochondrion inner membrane. Functionally, required for the assembly and stability of the mitochondrial ubiquinol-cytochrome c reductase complex (complex III (CIII) or cytochrome b-c1 complex), a multisubunit transmembrane complex that is part of the mitochondrial electron transport chain (ETC) which drives oxidative phosphorylation. Mediates early complex III biogenesis. Participates in regulating the levels of electron transport chain proteins, and therefore energy supply, in response to changes in energy demand. Also required for cytochrome c oxidase complex (complex IV) assembly. In Pongo abelii (Sumatran orangutan), this protein is Ubiquinol-cytochrome c reductase complex assembly factor 6.